Reading from the N-terminus, the 365-residue chain is Protein RecA (365 aa).

76-83 (GPESSGKT) is an ATP binding site. The tract at residues 346 to 365 (DVPGSERDGDEDAGDMEASA) is disordered. The span at 353–365 (DGDEDAGDMEASA) shows a compositional bias: acidic residues.

The protein belongs to the RecA family.

Its subcellular location is the cytoplasm. Functionally, can catalyze the hydrolysis of ATP in the presence of single-stranded DNA, the ATP-dependent uptake of single-stranded DNA by duplex DNA, and the ATP-dependent hybridization of homologous single-stranded DNAs. It interacts with LexA causing its activation and leading to its autocatalytic cleavage. In Parvibaculum lavamentivorans (strain DS-1 / DSM 13023 / NCIMB 13966), this protein is Protein RecA.